The following is a 294-amino-acid chain: Small ribosomal subunit protein uS2 (294 aa).

Residues 232–294 (RATGTTEAPE…SAAGEADAAK (63 aa)) form a disordered region. Residues 246–259 (EWERELLEGSKSEE) show a composition bias toward basic and acidic residues. A compositionally biased stretch (low complexity) spans 260–294 (AAAPAAAEEAPAAAEEAPAAAEATESAAGEADAAK).

The protein belongs to the universal ribosomal protein uS2 family.

The chain is Small ribosomal subunit protein uS2 from Arthrobacter sp. (strain FB24).